The chain runs to 238 residues: 7-cyano-7-deazaguanine synthase (238 aa).

14 to 24 (FSGGQDSATCL) provides a ligand contact to ATP. Residues cysteine 202, cysteine 217, cysteine 220, and cysteine 223 each coordinate Zn(2+).

It belongs to the QueC family. Zn(2+) serves as cofactor.

It carries out the reaction 7-carboxy-7-deazaguanine + NH4(+) + ATP = 7-cyano-7-deazaguanine + ADP + phosphate + H2O + H(+). Its pathway is purine metabolism; 7-cyano-7-deazaguanine biosynthesis. In terms of biological role, catalyzes the ATP-dependent conversion of 7-carboxy-7-deazaguanine (CDG) to 7-cyano-7-deazaguanine (preQ(0)). The protein is 7-cyano-7-deazaguanine synthase of Nitrobacter winogradskyi (strain ATCC 25391 / DSM 10237 / CIP 104748 / NCIMB 11846 / Nb-255).